Here is a 310-residue protein sequence, read N- to C-terminus: Ribosomal RNA small subunit methyltransferase H (310 aa).

S-adenosyl-L-methionine-binding positions include Gly32–His34, Asp52, Phe79, Asp100, and Gln107.

This sequence belongs to the methyltransferase superfamily. RsmH family.

The protein resides in the cytoplasm. The catalysed reaction is cytidine(1402) in 16S rRNA + S-adenosyl-L-methionine = N(4)-methylcytidine(1402) in 16S rRNA + S-adenosyl-L-homocysteine + H(+). In terms of biological role, specifically methylates the N4 position of cytidine in position 1402 (C1402) of 16S rRNA. This chain is Ribosomal RNA small subunit methyltransferase H, found in Bacillus thuringiensis subsp. konkukian (strain 97-27).